A 358-amino-acid chain; its full sequence is Myb family transcription factor APL (358 aa).

Positions 31–91 (TDPKPRLRWT…HLQKFRLGKQ (61 aa)) constitute an HTH myb-type domain. Residues 62 to 87 (PKTIMRVMGVKGLTLYHLKSHLQKFR) constitute a DNA-binding region (H-T-H motif). Residues 125–145 (RNMNEMQMEVQRRLHEQLEVQ) adopt a coiled-coil conformation. The short motif at 138–143 (LHEQLE) is the LHEQLE element. Residues 313 to 358 (RKSGLSGDEGNNGGKLLERPSPRRSPLSPMMNPNGGLIQGRNSPFG) form a disordered region.

Belongs to the MYB-CC family. Expressed in shoots and roots, specifically in the developing protophloem sieve elements. Detected in phloem and/or cambium. Expressed in the phloem tissues of various organs, including leaves and cotyledons, during vegetative growth.

It localises to the nucleus. Transcription factor required for phloem identity. Has a dual role both in promoting phloem differentiation and in repressing xylem differentiation during vascular development. Regulates the expression of the transcription factor NAC045 (AC A4VCM0). May activate the transcription of specific genes involved in phosphate uptake or assimilation. Promotes flowering through transcriptional activation of both FT and its transport machinery component, FTIP1. The chain is Myb family transcription factor APL from Arabidopsis thaliana (Mouse-ear cress).